The primary structure comprises 485 residues: Regulatory protein ViaA (485 aa).

The protein belongs to the ViaA family. Homodimer. Interacts with RavA.

It is found in the cytoplasm. Component of the RavA-ViaA chaperone complex, which may act on the membrane to optimize the function of some of the respiratory chains. ViaA stimulates the ATPase activity of RavA. This is Regulatory protein ViaA from Proteus mirabilis (strain HI4320).